The chain runs to 30 residues: Trypsin inhibitor 1 (30 aa).

Disulfide bonds link C4/C21, C11/C23, and C17/C29.

The protein belongs to the protease inhibitor I7 (squash-type serine protease inhibitor) family.

Its subcellular location is the secreted. Inhibits trypsin. This chain is Trypsin inhibitor 1, found in Momordica charantia (Bitter gourd).